Here is a 160-residue protein sequence, read N- to C-terminus: Small ribosomal subunit protein bS6 (160 aa).

It belongs to the bacterial ribosomal protein bS6 family.

Functionally, binds together with bS18 to 16S ribosomal RNA. The polypeptide is Small ribosomal subunit protein bS6 (Ureaplasma urealyticum serovar 10 (strain ATCC 33699 / Western)).